A 510-amino-acid chain; its full sequence is Ferredoxin--nitrite reductase (510 aa).

Cys-396, Cys-402, Cys-437, and Cys-441 together coordinate [4Fe-4S] cluster. Cys-441 provides a ligand contact to siroheme.

Belongs to the nitrite and sulfite reductase 4Fe-4S domain family.

It carries out the reaction 6 oxidized [2Fe-2S]-[ferredoxin] + NH4(+) + 2 H2O = nitrite + 6 reduced [2Fe-2S]-[ferredoxin] + 8 H(+). The polypeptide is Ferredoxin--nitrite reductase (nirA) (Leptolyngbya laminosa (Phormidium laminosum)).